A 134-amino-acid polypeptide reads, in one-letter code: Small ribosomal subunit protein uS11 (134 aa).

The protein belongs to the universal ribosomal protein uS11 family. Part of the 30S ribosomal subunit. Interacts with proteins S7 and S18. Binds to IF-3.

In terms of biological role, located on the platform of the 30S subunit, it bridges several disparate RNA helices of the 16S rRNA. Forms part of the Shine-Dalgarno cleft in the 70S ribosome. The sequence is that of Small ribosomal subunit protein uS11 from Corynebacterium diphtheriae (strain ATCC 700971 / NCTC 13129 / Biotype gravis).